The sequence spans 410 residues: Dipeptidase 1 (410 aa).

The signal sequence occupies residues 1 to 16 (MWTSWWLWPLVAVCTA). Residues histidine 36 and aspartate 38 each coordinate Zn(2+). N-linked (GlcNAc...) asparagine glycosylation occurs at asparagine 57. The cysteines at positions 87 and 170 are disulfide-linked. Glutamate 141 is a binding site for Zn(2+). Histidine 168 is a binding site for substrate. The Zn(2+) site is built by histidine 214 and histidine 235. Cysteine 242 and cysteine 274 are oxidised to a cystine. Positions 246 and 304 each coordinate substrate. Serine 384 is lipidated: GPI-anchor amidated serine. Positions 385-410 (EAPSLHRRPGALLASLSLLLLSLGLL) are cleaved as a propeptide — removed in mature form.

It belongs to the metallo-dependent hydrolases superfamily. Peptidase M19 family. As to quaternary structure, homodimer; disulfide-linked. The cofactor is Zn(2+).

The protein resides in the apical cell membrane. The protein localises to the cell projection. It localises to the microvillus membrane. The enzyme catalyses an L-aminoacyl-L-amino acid + H2O = 2 an L-alpha-amino acid. It carries out the reaction leukotriene D4 + H2O = leukotriene E4 + glycine. It catalyses the reaction L-cystine-bis-glycine + 2 H2O = L-cystine + 2 glycine. The catalysed reaction is a beta-lactam + H2O = a substituted beta-amino acid. The enzyme catalyses glycyldehydrophenylalanine + H2O = 2,3-didehydrophenylalanine + glycine. Its activity is regulated as follows. Inhibited by L-penicillamine. Beta-lactamase activity is inhibited by cilastatin. Functionally, hydrolyzes a wide range of dipeptides including the conversion of leukotriene D4 to leukotriene E4. Hydrolyzes cystinyl-bis-glycine (cys-bis-gly) formed during glutathione degradation. Also possesses beta lactamase activity and hydrolytically inactivates beta-lactam antibiotics. In terms of biological role, independently of its dipeptidase activity, acts as an adhesion receptor for neutrophil recruitment from bloodstream into inflamed lungs and liver. This is Dipeptidase 1 (DPEP1) from Oryctolagus cuniculus (Rabbit).